The primary structure comprises 264 residues: Thymidylate synthase (264 aa).

Arg21 serves as a coordination point for dUMP. Position 51 (His51) interacts with (6R)-5,10-methylene-5,6,7,8-tetrahydrofolate. 126-127 contributes to the dUMP binding site; sequence RR. The Nucleophile role is filled by Cys146. DUMP is bound by residues 166 to 169, Asn177, and 207 to 209; these read RSAD and HLY. (6R)-5,10-methylene-5,6,7,8-tetrahydrofolate is bound at residue Asp169. Ala263 contributes to the (6R)-5,10-methylene-5,6,7,8-tetrahydrofolate binding site.

This sequence belongs to the thymidylate synthase family. Bacterial-type ThyA subfamily. As to quaternary structure, homodimer.

It is found in the cytoplasm. It catalyses the reaction dUMP + (6R)-5,10-methylene-5,6,7,8-tetrahydrofolate = 7,8-dihydrofolate + dTMP. It participates in pyrimidine metabolism; dTTP biosynthesis. Its function is as follows. Catalyzes the reductive methylation of 2'-deoxyuridine-5'-monophosphate (dUMP) to 2'-deoxythymidine-5'-monophosphate (dTMP) while utilizing 5,10-methylenetetrahydrofolate (mTHF) as the methyl donor and reductant in the reaction, yielding dihydrofolate (DHF) as a by-product. This enzymatic reaction provides an intracellular de novo source of dTMP, an essential precursor for DNA biosynthesis. This Paramagnetospirillum magneticum (strain ATCC 700264 / AMB-1) (Magnetospirillum magneticum) protein is Thymidylate synthase.